Here is a 388-residue protein sequence, read N- to C-terminus: Succinate--CoA ligase [ADP-forming] subunit beta (388 aa).

Positions 9 to 244 (KQLFAEFGLP…PSQEDKREAH (236 aa)) constitute an ATP-grasp domain. ATP-binding positions include Lys-46, 53–55 (GRG), Glu-99, Ser-102, and Glu-107. Residues Asn-199 and Asp-213 each contribute to the Mg(2+) site. Substrate is bound by residues Asn-264 and 321–323 (GIV).

This sequence belongs to the succinate/malate CoA ligase beta subunit family. As to quaternary structure, heterotetramer of two alpha and two beta subunits. The cofactor is Mg(2+).

The enzyme catalyses succinate + ATP + CoA = succinyl-CoA + ADP + phosphate. The catalysed reaction is GTP + succinate + CoA = succinyl-CoA + GDP + phosphate. It participates in carbohydrate metabolism; tricarboxylic acid cycle; succinate from succinyl-CoA (ligase route): step 1/1. In terms of biological role, succinyl-CoA synthetase functions in the citric acid cycle (TCA), coupling the hydrolysis of succinyl-CoA to the synthesis of either ATP or GTP and thus represents the only step of substrate-level phosphorylation in the TCA. The beta subunit provides nucleotide specificity of the enzyme and binds the substrate succinate, while the binding sites for coenzyme A and phosphate are found in the alpha subunit. This chain is Succinate--CoA ligase [ADP-forming] subunit beta, found in Vibrio vulnificus (strain CMCP6).